Reading from the N-terminus, the 164-residue chain is Xanthine-guanine phosphoribosyltransferase (164 aa).

5-phospho-alpha-D-ribose 1-diphosphate contacts are provided by residues 41–42 and 98–106; these read RG and DDLTDTGKT. Mg(2+) is bound at residue D99. 2 residues coordinate guanine: D102 and I145. Xanthine is bound by residues D102 and I145. Residues 102–106 and 144–145 each bind GMP; these read DTGKT and WI.

This sequence belongs to the purine/pyrimidine phosphoribosyltransferase family. XGPT subfamily. Homotetramer. Requires Mg(2+) as cofactor.

The protein localises to the cell inner membrane. The enzyme catalyses GMP + diphosphate = guanine + 5-phospho-alpha-D-ribose 1-diphosphate. It catalyses the reaction XMP + diphosphate = xanthine + 5-phospho-alpha-D-ribose 1-diphosphate. It carries out the reaction IMP + diphosphate = hypoxanthine + 5-phospho-alpha-D-ribose 1-diphosphate. It functions in the pathway purine metabolism; GMP biosynthesis via salvage pathway; GMP from guanine: step 1/1. It participates in purine metabolism; XMP biosynthesis via salvage pathway; XMP from xanthine: step 1/1. Functionally, purine salvage pathway enzyme that catalyzes the transfer of the ribosyl-5-phosphate group from 5-phospho-alpha-D-ribose 1-diphosphate (PRPP) to the N9 position of the 6-oxopurines guanine and xanthine to form the corresponding ribonucleotides GMP (guanosine 5'-monophosphate) and XMP (xanthosine 5'-monophosphate), with the release of PPi. To a lesser extent, also acts on hypoxanthine. In Rhizobium johnstonii (strain DSM 114642 / LMG 32736 / 3841) (Rhizobium leguminosarum bv. viciae), this protein is Xanthine-guanine phosphoribosyltransferase.